Here is a 508-residue protein sequence, read N- to C-terminus: Aldehyde dehydrogenase family 7 member A1 (508 aa).

Residue 244-249 (GSSKVG) coordinates NAD(+). The Proton acceptor role is filled by E266. The active-site Nucleophile is C300.

Belongs to the aldehyde dehydrogenase family. As to quaternary structure, homotetramer.

The catalysed reaction is an aldehyde + NAD(+) + H2O = a carboxylate + NADH + 2 H(+). Its function is as follows. May play a role in fruit development. The protein is Aldehyde dehydrogenase family 7 member A1 of Malus domestica (Apple).